Consider the following 386-residue polypeptide: ADP,ATP carrier protein 1, mitochondrial (386 aa).

Residues 1 to 76 (MDQVQHPSVM…PSTASAICVQ (76 aa)) constitute a mitochondrion transit peptide. 3 Solcar repeats span residues 84–177 (SSFA…FKRL), 189–281 (KWFA…LKPV), and 289–375 (DSFF…LQLI). 5 helical membrane passes run 86-113 (FAID…VKLL), 154-178 (TANV…KRLF), 187-207 (YWKW…SSLL), 257-278 (FNIS…YDSL), and 292-312 (FASF…SYPI). 2 residues coordinate ADP: Arg-159 and Lys-171. Arg-316 lines the ADP pocket. The important for transport activity stretch occupies residues 316–321 (RRRMMM). The short motif at 316–321 (RRRMMM) is the Nucleotide carrier signature motif element. A helical transmembrane segment spans residues 352 to 372 (AGSNILRAIAGAGVLAGYDKL).

This sequence belongs to the mitochondrial carrier (TC 2.A.29) family. As to quaternary structure, monomer.

It is found in the mitochondrion inner membrane. The catalysed reaction is ADP(in) + ATP(out) = ADP(out) + ATP(in). With respect to regulation, the matrix-open state (m-state) is inhibited by the membrane-permeable bongkrekic acid (BKA). The cytoplasmic-open state (c-state) is inhibited by the membrane-impermeable toxic inhibitor carboxyatractyloside (CATR). Its function is as follows. ADP:ATP antiporter that mediates import of ADP into the mitochondrial matrix for ATP synthesis, and export of ATP out to fuel the cell. Cycles between the cytoplasmic-open state (c-state) and the matrix-open state (m-state): operates by the alternating access mechanism with a single substrate-binding site intermittently exposed to either the cytosolic (c-state) or matrix (m-state) side of the inner mitochondrial membrane. The sequence is that of ADP,ATP carrier protein 1, mitochondrial (ANT1) from Gossypium hirsutum (Upland cotton).